The chain runs to 362 residues: 45 kDa calcium-binding protein (362 aa).

The N-terminal stretch at 1–36 is a signal peptide; the sequence is MVWPWVAMASRWGPLIGLAPCCLWLLGAVLLMDASA. Asn-40 carries N-linked (GlcNAc...) asparagine glycosylation. EF-hand domains lie at 98–133 and 137–172; these read RSRRKLMVIFSKVDVNTDRKISAKEMQRWIMEKTAE and EAMEESKTHFRAVDPDGDGHVSWDEYKVKFLASKGH. Ser-99 bears the Phosphoserine mark. Residues Asp-111, Asn-113, Asp-115, Lys-117, Glu-122, Asp-150, Asp-152, Asp-154, His-156, and Glu-161 each contribute to the Ca(2+) site. Residue Thr-193 is modified to Phosphothreonine. EF-hand domains follow at residues 197 to 232, 233 to 268, 278 to 313, and 314 to 349; these read LENLKDRWYQADSPPADLLLTEEEFLSFLHPEHSRG, MLRFMVKEIVRDLDQDGDKQLSVPEFISLPVGTVEN, WVKDRKKEFEELIDSNHDGIVTAEELESYMDPMNEY, and NALNEAKQMIAVADENQNHHLEPEEVLKYSEFFTGS. Asp-213 contacts Ca(2+). Thr-217 is subject to Phosphothreonine. 6 residues coordinate Ca(2+): Glu-220, Asp-246, Asp-248, Asp-250, Gln-252, and Glu-257. Phosphothreonine is present on Thr-265. Residues Asp-291, Asn-293, and Asp-295 each coordinate Ca(2+). Thr-299 bears the Phosphothreonine mark. 6 residues coordinate Ca(2+): Glu-302, Asp-327, Asn-329, Asn-331, His-333, and Glu-338. Positions 309–362 are necessary for intracellular retention in Golgi apparatus lumen; sequence PMNEYNALNEAKQMIAVADENQNHHLEPEEVLKYSEFFTGSKLVDYARSVHEEF.

It belongs to the CREC family. Isoform 5 interacts with STXBP1; the interaction is enhanced in presence of calcium. Isoform 5 interacts with STX3. As to expression, ubiquitous. Isoform 5 is expressed in pancreas.

Its subcellular location is the golgi apparatus lumen. It localises to the cytoplasm. The protein resides in the cell membrane. The protein localises to the cell projection. It is found in the bleb. May regulate calcium-dependent activities in the endoplasmic reticulum lumen or post-ER compartment. Functionally, isoform 5 may be involved in the exocytosis of zymogens by pancreatic acini. The sequence is that of 45 kDa calcium-binding protein (SDF4) from Homo sapiens (Human).